The primary structure comprises 118 residues: Small ribosomal subunit protein uS13 (118 aa).

The interval 93 to 118 is disordered; that stretch reads RGLPVRGQRTKTNARTRKGPRKPIRK.

This sequence belongs to the universal ribosomal protein uS13 family. Part of the 30S ribosomal subunit. Forms a loose heterodimer with protein S19. Forms two bridges to the 50S subunit in the 70S ribosome.

Located at the top of the head of the 30S subunit, it contacts several helices of the 16S rRNA. In the 70S ribosome it contacts the 23S rRNA (bridge B1a) and protein L5 of the 50S subunit (bridge B1b), connecting the 2 subunits; these bridges are implicated in subunit movement. Contacts the tRNAs in the A and P-sites. The polypeptide is Small ribosomal subunit protein uS13 (Pseudomonas paraeruginosa (strain DSM 24068 / PA7) (Pseudomonas aeruginosa (strain PA7))).